The chain runs to 254 residues: MAAVAATAAAKGNGGGGGRAGAGDASGTRKKKGPGPLATAYLVIYNVVMTAGWLVIAVGLVRAYLAKGSYHSLYYSIEKPLKFFQTGALLEILHCAIGIVPSSVVLTSFQVMSRVFLIWAVTHSVKEVQSEDSVLLFVIAWTITEIIRYSFYTFSLLNHLPYLIKWARYTLFIVLYPMGVSGELLTIYAALPFVRQAGLYSISLPNKYNFSFDYYAFLILIMISYIPIFPQLYFHMIHQRRKILSHTEEHKKFE.

The residue at position 2 (Ala-2) is an N-acetylalanine. The Cytoplasmic portion of the chain corresponds to Ala-2–Tyr-41. The disordered stretch occupies residues Lys-11–Gly-33. Positions Gly-12–Gly-21 are enriched in gly residues. Residues Leu-42–Leu-60 form a helical membrane-spanning segment. Residues Val-61 to Lys-79 lie on the Lumenal side of the membrane. A helical membrane pass occupies residues Pro-80–Ile-97. The Cytoplasmic segment spans residues Gly-98–Thr-107. Residues Ser-108–Val-125 traverse the membrane as a helical segment. Over Lys-126–Ser-130 the chain is Lumenal. The chain crosses the membrane as a helical span at residues Glu-131–Ile-146. Residues Ile-147–Tyr-169 lie on the Cytoplasmic side of the membrane. A helical membrane pass occupies residues Thr-170–Ile-187. Active-site residues include Tyr-176 and Glu-183. The Lumenal portion of the chain corresponds to Tyr-188–Phe-217. Residues Gly-198–Tyr-214 are may be involved in interaction with TECR. Asn-209 carries N-linked (GlcNAc...) asparagine glycosylation. The chain crosses the membrane as a helical span at residues Leu-218–His-235. Residues Met-236 to Glu-254 are Cytoplasmic-facing.

Belongs to the very long-chain fatty acids dehydratase HACD family. May interact with enzymes of the ELO family (including ELOVL1); with those enzymes that mediate condensation, the first of the four steps of the reaction cycle responsible for fatty acids elongation, may be part of a larger fatty acids elongase complex. Interacts with BCAP31. Interacts (via the third lumenal loop) with TECR. Highly expressed in testis, spleen, prostate, colon and heart, followed by moderate expression in thymus, ovary, small intestine, peripheral blood leukocytes, liver, skeletal muscle and pancreas. Weakly detected in kidney, placenta, brain and lung.

The protein localises to the endoplasmic reticulum membrane. The enzyme catalyses a very-long-chain (3R)-3-hydroxyacyl-CoA = a very-long-chain (2E)-enoyl-CoA + H2O. It catalyses the reaction (3R)-hydroxyhexadecanoyl-CoA = (2E)-hexadecenoyl-CoA + H2O. The catalysed reaction is (3R)-hydroxyoctadecanoyl-CoA = (2E)-octadecenoyl-CoA + H2O. It carries out the reaction (3R)-hydroxyeicosanoyl-CoA = (2E)-eicosenoyl-CoA + H2O. The enzyme catalyses (3R)-hydroxydocosanoyl-CoA = (2E)-docosenoyl-CoA + H2O. It catalyses the reaction (3R)-hydroxytetracosanoyl-CoA = (2E)-tetracosenoyl-CoA + H2O. The catalysed reaction is (3R)-hydroxyhexacosanoyl-CoA = (2E)-hexacosenoyl-CoA + H2O. The protein operates within lipid metabolism; fatty acid biosynthesis. In terms of biological role, catalyzes the third of the very long-chain fatty acids (VLCFA) elongation four-step cycle (condensation, reduction, dehydration, and reduction). This endoplasmic reticulum-elongation process is characterized by the addition of two carbons to the lipid chain through each cycle. This enzyme catalyzes the dehydration of the 3-hydroxyacyl-CoA intermediate into trans-2,3-enoyl-CoA, within each cycle of elongation. Therefore, it participates in the production of various VLCFAs involved in multiple biological processes as precursors of membrane lipids and lipid mediators. The protein is Very-long-chain (3R)-3-hydroxyacyl-CoA dehydratase 2 of Homo sapiens (Human).